The sequence spans 445 residues: uncharacterized protein (445 aa).

This is an uncharacterized protein from Acanthamoeba polyphaga mimivirus (APMV).